A 753-amino-acid polypeptide reads, in one-letter code: MAAAVGPLGDGELWQSWLPNHVVFLRLREGVRNQSPAEAEKPAASTSPSCPSLPPHLPTRNLVFGLGGELFLWDAEGSAFLVVRLRGPSGGGVEPPLSQYQRLLCINPPLFEIHQVLLSPTQHHVALIGSKGLMALELPQRWGKDSEFEGGKATVNCSTIPIAERFFTSSTSLTLKHAAWYPSEMLDPHIVLLTSDNVIRIYSLREPQTPTKVIVLSEAEEESLILNKGRAYTASLGETAVAFDFGPLVTVSKNIFEQKDRDVVAYPLYILYENGETFLTYVSLLHSPGNIGKLLGPLPMHPAAEDNYGYDACAILCLPCVPNILVIATESGMLYHCVVLEGEEEDDQTLEKSWDPRADFIPSLYVFECVELELALKLASGEDDPFASDFSCPIKLHRDPKCPSRYHCSHEAGVHSVGLTWIHKLHKFLGSDEEDKDSLQELTAEQKCFVEHILCTKPLPCRQPAPIRGFWIVPDILGPTMICITSTYECLIRPLLSTVHPASPPLLCTQEDAEVAESPLRILAETPDSFEKHIKRILQRSAANPAFLKNCSARSSEKDLAPPPEECLQLISRATQVFREQYILKQDLAKEEIQRRVKLLCDQKRKQLEDLNYCREERVSHLFRKSLREMAERLADKYEEAKEKQEDIMNRMKKVLHSFHAQLPVLSDSERDMKKELQLIPDQLRHLGNAIKQVTMKKDYQQRKMEKVLSPQKPTITLSAYQRKCIQSILKEEGEHIREMVKQINDIRNHVTF.

At Ala2 the chain carries N-acetylalanine. A phosphoserine mark is found at Ser35, Ser380, Ser438, and Ser518. Thr526 carries the phosphothreonine modification. Residue Ser541 is modified to Phosphoserine. A coiled-coil region spans residues 623–663; that stretch reads FRKSLREMAERLADKYEEAKEKQEDIMNRMKKVLHSFHAQL. Ser710 carries the phosphoserine modification.

In terms of assembly, interacts with NUP214/CAN. Interacts with NUP62 and NUP98.

The protein localises to the nucleus. It is found in the nuclear pore complex. Component of nuclear pore complex. In Mus musculus (Mouse), this protein is Nuclear pore complex protein Nup88 (Nup88).